Here is an 872-residue protein sequence, read N- to C-terminus: Protein SCD5 (872 aa).

2 disordered regions span residues 1 to 98 (MSFD…SGGD) and 209 to 239 (PKPR…TGDQ). Positions 48 to 85 (FWDQGSRSHSDTTLSYRNNHSNTAADNATNVSSPQKDN) are enriched in polar residues. Positions 272–276 (KKVRF) match the KKRVK motif; Required for interaction with GLC7, endocytosis and actin cytoskeleton organization motif. Disordered stretches follow at residues 280-321 (ITFQ…LDFT) and 338-358 (SGLV…KKVL). Composition is skewed to polar residues over residues 284–296 (DPPN…SNNS) and 339–348 (GLVSSLPSEQ). A run of 12 repeats spans residues 405–424 (QLPL…HLVR), 439–458 (QTGL…YLMR), 479–498 (SGGL…YLMK), 534–545 (SPNITLPQSNQQ), 564–575 (SPQHTYSNNVRI), 593–604 (PPQNTLPQHQQS), 608–619 (SPQNTIPQHQRS), 623–634 (SPQNTFTQNQPI), 636–647 (SPQHTYSNNQAT), 650–661 (SPQNTYTNNQQQ), 683–694 (PPQHMYSNVQKQ), and 717–728 (SPQNAANSYFQS). The interval 405-448 (QLPLEPLKPTATGSANHLVREEYNQGLHPSNGAIQTGLQPLKPT) is 3 X 20 AA approximate repeats. Residues Thr-416 and Thr-450 each carry the phosphothreonine; by PRK1 modification. Residues 460 to 489 (HMEQPQSIKPSSTPETVTNSGGLQPLKPTA) form a disordered region. Residues 462–481 (EQPQSIKPSSTPETVTNSGG) are compositionally biased toward polar residues. Thr-490 is subject to Phosphothreonine; by PRK1. Disordered stretches follow at residues 516–571 (QFTN…TYSN) and 591–620 (AFPP…QRSQ). The interval 534–728 (SPNITLPQSN…QNAANSYFQS (195 aa)) is 9 X 12 AA approximate repeats. Residue Ser-564 is modified to Phosphoserine. The span at 594–620 (PQNTLPQHQQSHLLSPQNTIPQHQRSQ) shows a compositional bias: polar residues. Residues 649–681 (ISPQNTYTNNQQQPQHLPPPPPPRAQQQQQGAI) form a disordered region. Residues 651-663 (PQNTYTNNQQQPQ) are compositionally biased toward low complexity. Positions 697–727 (LVPTQPSYTNSPSIQSPNFLSPQNAANSYFQ) are enriched in polar residues. Disordered regions lie at residues 697–758 (LVPT…ISSF) and 806–838 (NSDI…QFPF). The segment covering 728–745 (SLLSSSPSPNPTPSNAST) has biased composition (low complexity). Composition is skewed to polar residues over residues 746–758 (VNGN…ISSF) and 806–815 (NSDIHSQPNK). The segment covering 823-835 (QQVHQQQQQQQQQ) has biased composition (low complexity).

In terms of assembly, interacts (via KKVRF motif) with phosphatase GLC7. In terms of processing, phosphorylation by PRK1 and/or AKL1 on Thr-416, Thr-450 and Thr-490 of repeats 1-1, 1-2 and/or 1-3 negatively regulates SCD5 function in endocytosis and actin cytoskeleton organization.

It localises to the membrane. Its function is as follows. Regulates both fluid phase and receptor-mediated endocytosis. Involved in vesicular transport at a late stage of the secretory pathway. Regulates actin cytoskeleton organization. This Saccharomyces cerevisiae (strain ATCC 204508 / S288c) (Baker's yeast) protein is Protein SCD5 (SCD5).